The following is a 93-amino-acid chain: Large ribosomal subunit protein bL31 (93 aa).

The interval 68–93 (GSADAAADEKKTDAKNNNKDNTSKED) is disordered. Positions 74–93 (ADEKKTDAKNNNKDNTSKED) are enriched in basic and acidic residues.

This sequence belongs to the bacterial ribosomal protein bL31 family. Type A subfamily. In terms of assembly, part of the 50S ribosomal subunit.

Functionally, binds the 23S rRNA. The polypeptide is Large ribosomal subunit protein bL31 (Prochlorococcus marinus (strain MIT 9303)).